We begin with the raw amino-acid sequence, 251 residues long: Octanoyltransferase (251 aa).

The 182-residue stretch at 56–237 (ADTGDEIWVV…RLIANLDGES (182 aa)) folds into the BPL/LPL catalytic domain. Substrate is bound by residues 96 to 103 (RGGQITYH), 168 to 170 (ALG), and 181 to 183 (GLS). Cys-199 (acyl-thioester intermediate) is an active-site residue.

Belongs to the LipB family.

The protein resides in the cytoplasm. It catalyses the reaction octanoyl-[ACP] + L-lysyl-[protein] = N(6)-octanoyl-L-lysyl-[protein] + holo-[ACP] + H(+). Its pathway is protein modification; protein lipoylation via endogenous pathway; protein N(6)-(lipoyl)lysine from octanoyl-[acyl-carrier-protein]: step 1/2. Functionally, catalyzes the transfer of endogenously produced octanoic acid from octanoyl-acyl-carrier-protein onto the lipoyl domains of lipoate-dependent enzymes. Lipoyl-ACP can also act as a substrate although octanoyl-ACP is likely to be the physiological substrate. The chain is Octanoyltransferase from Burkholderia ambifaria (strain MC40-6).